The primary structure comprises 1366 residues: Serine/threonine-protein kinase RUNKEL (1366 aa).

Residues 10 to 18 (IGHGKCSTV) and K33 contribute to the ATP site. The active-site Proton acceptor is D121. 4 disordered regions span residues 276 to 356 (TKPC…VNIL), 367 to 386 (QKEN…NENC), 398 to 502 (LDFD…DSSK), and 524 to 549 (PSRK…FSKK). A compositionally biased stretch (basic and acidic residues) spans 283-302 (RNGDRPNKTPPKYREKDRKG). The segment covering 304-313 (SKQNENSIQG) has biased composition (polar residues). The span at 367 to 376 (QKENEKENYR) shows a compositional bias: basic and acidic residues. Acidic residues predominate over residues 398–414 (LDFDENNDDEGPDESEG). The span at 422-433 (QEERVMSHNENH) shows a compositional bias: basic and acidic residues. Residues 438–454 (VVSSNVPDENSSANETP) show a composition bias toward polar residues. HEAT repeat units lie at residues 595-633 (LTNG…HSTS), 638-675 (LANS…YIST), 699-737 (QVSN…QGAY), 835-872 (TEEK…NSRR), 878-907 (FCNA…AFVN), 908-945 (VIAS…RAPV), 946-986 (KTNA…LVEA), 992-1018 (DDFR…NGEI), 1019-1057 (IIRE…LLTE), 1072-1111 (ISNS…IKIS), 1279-1316 (TNLP…YACK), and 1329-1366 (GHDV…RLPR).

Belongs to the protein kinase superfamily. Ser/Thr protein kinase family. In terms of assembly, binds to microtubules (MT). In terms of tissue distribution, expressed in proliferating tissues of seedlings, lateral roots, young rosette leaves, siliques, flowers, embryos and stems (including apical meristem).

It is found in the cytoplasm. The protein resides in the cytoskeleton. It localises to the phragmoplast. The protein localises to the spindle. The catalysed reaction is L-seryl-[protein] + ATP = O-phospho-L-seryl-[protein] + ADP + H(+). It catalyses the reaction L-threonyl-[protein] + ATP = O-phospho-L-threonyl-[protein] + ADP + H(+). Its function is as follows. Essential protein that regulates phragmoplast microtubule organization during cell plate expansion in cytokinesis during cell division, both somatic and syncytial. Required for endosperm cellularisation. In pollen development, involved in cellularisation during microsporogenesis by regulating radial microtubules (MT) organization in microspore mother cells. Seems to not have kinase activity. The chain is Serine/threonine-protein kinase RUNKEL from Arabidopsis thaliana (Mouse-ear cress).